A 593-amino-acid polypeptide reads, in one-letter code: Cysteine/serine-rich nuclear protein 1 (593 aa).

Disordered regions lie at residues 1-66 (MTGL…RDFC), 313-392 (FREL…GVDD), and 478-497 (REGS…GQSS). Composition is skewed to low complexity over residues 17–46 (SSVS…VSRA) and 351–372 (SCSS…TSGA).

The protein belongs to the AXUD1 family.

The protein resides in the nucleus. In terms of biological role, binds to the consensus sequence 5'-AGAGTG-3' and has transcriptional activator activity. May have a tumor-suppressor function. May play a role in apoptosis. The sequence is that of Cysteine/serine-rich nuclear protein 1 (CSRNP1) from Pongo abelii (Sumatran orangutan).